Reading from the N-terminus, the 342-residue chain is MTNILSPEKSENDQELPIRPSYLQEFVGQQQIKENLLVFIKAAKSRNEHLDHTLFYGPPGLGKTTLAKIISNEIGGNFKSTAGPAIIKAADLAAILTNLEKNDVLFIDEIHRLNTLVEEILYSAMEDFELDIIIGEGSAARSVKITLPKFTLIGATTRFGMLSNSLRDRFGIPMRLNFYNTEELKQVLNRASKLLDIDLTDSGSEEIAKRSRGTPRIALRLLRRIRDFAVVDGKLRIDKEICDFGLKRLTVDSIGLDSNDYRYLKFIADNYHGGPVGIETIAAALSEQRDELEETIEPYLIKIGLVKRTPRGRVITIAAFEHLKMPIPNKSQHQFNILNENE.

The interval 1–179 is large ATPase domain (RuvB-L); it reads MTNILSPEKS…FGIPMRLNFY (179 aa). ATP-binding positions include I18, R19, G60, K63, T64, T65, 126–128, R169, Y179, and R216; that span reads EDF. T64 is a binding site for Mg(2+). A small ATPAse domain (RuvB-S) region spans residues 180-250; it reads NTEELKQVLN…ICDFGLKRLT (71 aa). A head domain (RuvB-H) region spans residues 253–342; the sequence is SIGLDSNDYR…HQFNILNENE (90 aa). Residues R289, R308, and R313 each contribute to the DNA site.

It belongs to the RuvB family. Homohexamer. Forms an RuvA(8)-RuvB(12)-Holliday junction (HJ) complex. HJ DNA is sandwiched between 2 RuvA tetramers; dsDNA enters through RuvA and exits via RuvB. An RuvB hexamer assembles on each DNA strand where it exits the tetramer. Each RuvB hexamer is contacted by two RuvA subunits (via domain III) on 2 adjacent RuvB subunits; this complex drives branch migration. In the full resolvosome a probable DNA-RuvA(4)-RuvB(12)-RuvC(2) complex forms which resolves the HJ.

It localises to the cytoplasm. It catalyses the reaction ATP + H2O = ADP + phosphate + H(+). Its function is as follows. The RuvA-RuvB-RuvC complex processes Holliday junction (HJ) DNA during genetic recombination and DNA repair, while the RuvA-RuvB complex plays an important role in the rescue of blocked DNA replication forks via replication fork reversal (RFR). RuvA specifically binds to HJ cruciform DNA, conferring on it an open structure. The RuvB hexamer acts as an ATP-dependent pump, pulling dsDNA into and through the RuvAB complex. RuvB forms 2 homohexamers on either side of HJ DNA bound by 1 or 2 RuvA tetramers; 4 subunits per hexamer contact DNA at a time. Coordinated motions by a converter formed by DNA-disengaged RuvB subunits stimulates ATP hydrolysis and nucleotide exchange. Immobilization of the converter enables RuvB to convert the ATP-contained energy into a lever motion, pulling 2 nucleotides of DNA out of the RuvA tetramer per ATP hydrolyzed, thus driving DNA branch migration. The RuvB motors rotate together with the DNA substrate, which together with the progressing nucleotide cycle form the mechanistic basis for DNA recombination by continuous HJ branch migration. Branch migration allows RuvC to scan DNA until it finds its consensus sequence, where it cleaves and resolves cruciform DNA. This chain is Holliday junction branch migration complex subunit RuvB, found in Rickettsia typhi (strain ATCC VR-144 / Wilmington).